A 476-amino-acid chain; its full sequence is Viral inhibitor of caspase-8-induced apoptosis (476 aa).

This sequence belongs to the herpesviridae US22 family. In terms of assembly, interacts with host pro-caspase-8/CASP8; this interaction inhibits CASP8 activation.

Functionally, plays a role in the inhibition of apoptosis by interacting with the pro-domain of pro-caspase-8/CASP8 and thus preventing its activation. The sequence is that of Viral inhibitor of caspase-8-induced apoptosis (UL36) from Human cytomegalovirus (strain Merlin) (HHV-5).